The sequence spans 438 residues: Probable glycine dehydrogenase (decarboxylating) subunit 1 (438 aa).

This sequence belongs to the GcvP family. N-terminal subunit subfamily. As to quaternary structure, the glycine cleavage system is composed of four proteins: P, T, L and H. In this organism, the P 'protein' is a heterodimer of two subunits.

The catalysed reaction is N(6)-[(R)-lipoyl]-L-lysyl-[glycine-cleavage complex H protein] + glycine + H(+) = N(6)-[(R)-S(8)-aminomethyldihydrolipoyl]-L-lysyl-[glycine-cleavage complex H protein] + CO2. Its function is as follows. The glycine cleavage system catalyzes the degradation of glycine. The P protein binds the alpha-amino group of glycine through its pyridoxal phosphate cofactor; CO(2) is released and the remaining methylamine moiety is then transferred to the lipoamide cofactor of the H protein. The chain is Probable glycine dehydrogenase (decarboxylating) subunit 1 from Syntrophomonas wolfei subsp. wolfei (strain DSM 2245B / Goettingen).